A 1007-amino-acid chain; its full sequence is Integrator complex subunit 8 (1007 aa).

The WFEF motif signature appears at 19 to 24 (WFEFLL). Residues 56–78 (TAQESVGTPGSDLQNLNQTPSNS) show a composition bias toward polar residues. The tract at residues 56–112 (TAQESVGTPGSDLQNLNQTPSNSGPIPGVVGGAPAPTTPTASGGVGMPHSPQRPAEK) is disordered. Over residues 79–97 (GPIPGVVGGAPAPTTPTAS) the composition is skewed to low complexity.

Belongs to the Integrator subunit 8 family. In terms of assembly, belongs to the multiprotein complex Integrator, at least composed of IntS1, IntS2, IntS3, IntS4, omd/IntS5, IntS6, defl/IntS7, IntS8, IntS9, IntS10, IntS11, IntS12, asun/IntS13, IntS14 and IntS15. The core complex associates with protein phosphatase 2A subunits mts/PP2A and Pp2A-29B, to form the Integrator-PP2A (INTAC) complex.

The protein resides in the nucleus. The protein localises to the chromosome. In terms of biological role, component of the integrator complex, a multiprotein complex that terminates RNA polymerase II (Pol II) transcription in the promoter-proximal region of genes. The integrator complex provides a quality checkpoint during transcription elongation by driving premature transcription termination of transcripts that are unfavorably configured for transcriptional elongation: the complex terminates transcription by (1) catalyzing dephosphorylation of the C-terminal domain (CTD) of Pol II subunit Polr2A/Rbp1 and Spt5, and (2) degrading the exiting nascent RNA transcript via endonuclease activity. The integrator complex is also involved in the 3'-end processing of the U7 snRNA, and also the spliceosomal snRNAs U1, U2, U4 and U5. Within the integrator complex, INTS8 is required for the recruitment of protein phosphatase 2A (PP2A) to transcription pause-release checkpoint. The protein is Integrator complex subunit 8 of Drosophila melanogaster (Fruit fly).